Consider the following 882-residue polypeptide: Kelch repeat-containing protein 2 (882 aa).

Residues 41–60 are disordered; the sequence is TPTLPPNQHRGISGASTALP. Kelch repeat units follow at residues 99-143, 153-207, 213-267, 268-317, 319-369, and 371-417; these read RIFV…PPRV, AYVV…IIAS, KLYL…AYDN, KLWV…VYKH, MCVL…LMKN, and KLLI…LCPG. Phosphothreonine is present on T455. A compositionally biased stretch (basic and acidic residues) spans 480-496; the sequence is LDDKAFERKSDREEKKP. The interval 480–516 is disordered; the sequence is LDDKAFERKSDREEKKPQSSKVDSSINKESPGTGIKV. The span at 498–509 shows a compositional bias: polar residues; that stretch reads SSKVDSSINKES. S509 carries the phosphoserine modification. 2 coiled-coil regions span residues 550–685 and 728–881; these read KNLF…QKIT and NKIE…LEQK.

Interacts with KEL1.

This is Kelch repeat-containing protein 2 (KEL2) from Saccharomyces cerevisiae (strain ATCC 204508 / S288c) (Baker's yeast).